We begin with the raw amino-acid sequence, 194 residues long: 3-isopropylmalate dehydratase small subunit (194 aa).

The protein belongs to the LeuD family. LeuD type 1 subfamily. Heterodimer of LeuC and LeuD.

It carries out the reaction (2R,3S)-3-isopropylmalate = (2S)-2-isopropylmalate. It participates in amino-acid biosynthesis; L-leucine biosynthesis; L-leucine from 3-methyl-2-oxobutanoate: step 2/4. In terms of biological role, catalyzes the isomerization between 2-isopropylmalate and 3-isopropylmalate, via the formation of 2-isopropylmaleate. The protein is 3-isopropylmalate dehydratase small subunit of Leuconostoc mesenteroides subsp. mesenteroides (strain ATCC 8293 / DSM 20343 / BCRC 11652 / CCM 1803 / JCM 6124 / NCDO 523 / NBRC 100496 / NCIMB 8023 / NCTC 12954 / NRRL B-1118 / 37Y).